Here is a 299-residue protein sequence, read N- to C-terminus: tRNA dimethylallyltransferase (299 aa).

10 to 17 (GPTAVGKT) serves as a coordination point for ATP. Residue 12-17 (TAVGKT) coordinates substrate. Residues 35-38 (DSQQ) form an interaction with substrate tRNA region.

This sequence belongs to the IPP transferase family. In terms of assembly, monomer. It depends on Mg(2+) as a cofactor.

The catalysed reaction is adenosine(37) in tRNA + dimethylallyl diphosphate = N(6)-dimethylallyladenosine(37) in tRNA + diphosphate. In terms of biological role, catalyzes the transfer of a dimethylallyl group onto the adenine at position 37 in tRNAs that read codons beginning with uridine, leading to the formation of N6-(dimethylallyl)adenosine (i(6)A). The chain is tRNA dimethylallyltransferase from Streptococcus thermophilus (strain ATCC BAA-491 / LMD-9).